The following is a 552-amino-acid chain: ATP synthase subunit alpha (552 aa).

173 to 180 lines the ATP pocket; it reads GDRQTGKT. The tract at residues 516 to 552 is disordered; the sequence is DGKPLVNEPAPSPLDPGLVRQESIPVHRPAARKDDEG.

This sequence belongs to the ATPase alpha/beta chains family. F-type ATPases have 2 components, CF(1) - the catalytic core - and CF(0) - the membrane proton channel. CF(1) has five subunits: alpha(3), beta(3), gamma(1), delta(1), epsilon(1). CF(0) has three main subunits: a(1), b(2) and c(9-12). The alpha and beta chains form an alternating ring which encloses part of the gamma chain. CF(1) is attached to CF(0) by a central stalk formed by the gamma and epsilon chains, while a peripheral stalk is formed by the delta and b chains.

It localises to the cell membrane. It catalyses the reaction ATP + H2O + 4 H(+)(in) = ADP + phosphate + 5 H(+)(out). In terms of biological role, produces ATP from ADP in the presence of a proton gradient across the membrane. The alpha chain is a regulatory subunit. The polypeptide is ATP synthase subunit alpha (Frankia casuarinae (strain DSM 45818 / CECT 9043 / HFP020203 / CcI3)).